Reading from the N-terminus, the 442-residue chain is Yes-associated protein homolog 1 (442 aa).

Residues 1–10 show a composition bias toward basic residues; the sequence is MASKSIHKKH. Residues 1–84 form a disordered region; that stretch reads MASKSIHKKH…GSVDESSRTA (84 aa). Polar residues-rich tracts occupy residues 13–22 and 55–71; these read NSQQDKNQFS and LPSSYYHQKRNPGSSAH. Ser-104 carries the post-translational modification Phosphoserine. Residues 108–120 show a composition bias toward polar residues; that stretch reads LHTSVNNGQSSAT. The tract at residues 108-136 is disordered; that stretch reads LHTSVNNGQSSATVPHPSHHNVHHQHSKS. Residues 124–134 are compositionally biased toward basic residues; sequence PSHHNVHHQHS. Residues 203 to 236 enclose the WW domain; sequence LPMPQGWEMCYDSDGVRYFKDHNSKTTTWDDPRL.

It belongs to the YAP1 family. Highly divergent. In terms of assembly, interacts (via WW domain) with wts-1 (via N-terminus). Interacts (via WW domain) with egl-44; the interaction may regulate transcription. As to expression, expressed in epithelia, hypodermis, muscles, pharynx, intestine, gonadal sheath cells, vulva, spermatheca and in excretory tissue.

The protein localises to the cytoplasm. The protein resides in the nucleus. It localises to the cell projection. It is found in the cilium. Its subcellular location is the cytoskeleton. The protein localises to the cilium axoneme. Plays a role in thermal stress response and in aging. The chain is Yes-associated protein homolog 1 from Caenorhabditis elegans.